A 565-amino-acid polypeptide reads, in one-letter code: Carboxylesterase 1D (565 aa).

Residues 1 to 18 (MRLYPLVWLFLAACTAWG) form the signal peptide. N-linked (GlcNAc...) asparagine glycosylation is present at Asn79. Cysteines 87 and 116 form a disulfide. Residue Ser221 is the Acyl-ester intermediate of the active site. The cysteines at positions 273 and 284 are disulfide-linked. Glu353 serves as the catalytic Charge relay system. Lys382 carries the N6-succinyllysine modification. His466 functions as the Charge relay system in the catalytic mechanism. Asn489 is a glycosylation site (N-linked (GlcNAc...) asparagine). Positions 562–565 (HVEL) match the Prevents secretion from ER motif.

The protein belongs to the type-B carboxylesterase/lipase family. Homotrimer. Detected in liver, lung and testis, but not in kidney (at protein level).

It localises to the endoplasmic reticulum lumen. It is found in the cytoplasm. The protein localises to the cytosol. Its subcellular location is the lipid droplet. The protein resides in the microsome. It catalyses the reaction all-trans-retinyl hexadecanoate + H2O = all-trans-retinol + hexadecanoate + H(+). The enzyme catalyses a carboxylic ester + H2O = an alcohol + a carboxylate + H(+). The catalysed reaction is a long-chain fatty acyl ethyl ester + H2O = a long-chain fatty acid + ethanol + H(+). Its activity is regulated as follows. FAEE-synthesizing and PNPB-hydrolyzing activities are both inhibited by DFP. Major lipase in white adipose tissue. Involved in the metabolism of xenobiotics and of natural substrates. Hydrolyzes triacylglycerols and monoacylglycerols, with a preference for monoacylglycerols. The susceptibility of the substrate increases with decreasing acyl chain length of the fatty acid moiety. Catalyzes the synthesis of fatty acid ethyl esters. Hydrolyzes retinyl esters. This Rattus norvegicus (Rat) protein is Carboxylesterase 1D.